The chain runs to 926 residues: Rap guanine nucleotide exchange factor 3 (926 aa).

Ser-79 carries the phosphoserine modification. One can recognise a DEP domain in the interval 110–186; sequence ATYPTLIRDR…RDAQFYRFPG (77 aa). Residues 218–242 are interaction with PDE3B; it reads TVALRKSPGQRTDEELDLIFEELVH. 3',5'-cyclic AMP-binding positions include 311–314 and 321–322; these read GQLA and RA. The tract at residues 369-388 is disordered; the sequence is TSQGAGPSRPPTPGRNRYTV. One can recognise an N-terminal Ras-GEF domain in the interval 384-521; that stretch reads NRYTVMSGTP…EQYPERRRHH (138 aa). The interaction with PDE3B stretch occupies residues 398–422; it reads ELLLEAMRPDSSAHDPTETFLSDFL. Ser-531 and Ser-867 each carry phosphoserine. The region spanning 665–892 is the Ras-GEF domain; it reads SAKDLAGQLT…SRISTCSEQS (228 aa).

As to quaternary structure, interacts with PDE3B and PIK3R6; form a signaling complex that regulates phosphatidylinositol 3-kinase gamma in angiogenesis. As to expression, expressed at low levels in adult brain. Strongly expressed in parts of the neonatal brain, including the septum and the thalamus.

The protein localises to the cytoplasm. It localises to the membrane. Guanine nucleotide exchange factor (GEF) for RAP1A and RAP2A small GTPases that is activated by binding cAMP. Through simultaneous binding of PDE3B to RAPGEF3 and PIK3R6 is assembled in a signaling complex in which it activates the PI3K gamma complex and which is involved in angiogenesis. Plays a role in the modulation of the cAMP-induced dynamic control of endothelial barrier function through a pathway that is independent on Rho-mediated signaling. Required for the actin rearrangement at cell-cell junctions, such as stress fibers and junctional actin. The sequence is that of Rap guanine nucleotide exchange factor 3 (Rapgef3) from Rattus norvegicus (Rat).